Reading from the N-terminus, the 103-residue chain is uncharacterized protein (103 aa).

This is an uncharacterized protein from Homo sapiens (Human).